A 140-amino-acid chain; its full sequence is Nucleoside diphosphate kinase (140 aa).

ATP-binding residues include Lys-11, Phe-59, Arg-87, Thr-93, Arg-104, and Asn-114. His-117 (pros-phosphohistidine intermediate) is an active-site residue.

Belongs to the NDK family. Homotetramer. It depends on Mg(2+) as a cofactor.

The protein resides in the cytoplasm. It carries out the reaction a 2'-deoxyribonucleoside 5'-diphosphate + ATP = a 2'-deoxyribonucleoside 5'-triphosphate + ADP. It catalyses the reaction a ribonucleoside 5'-diphosphate + ATP = a ribonucleoside 5'-triphosphate + ADP. Major role in the synthesis of nucleoside triphosphates other than ATP. The ATP gamma phosphate is transferred to the NDP beta phosphate via a ping-pong mechanism, using a phosphorylated active-site intermediate. The polypeptide is Nucleoside diphosphate kinase (Nitrobacter hamburgensis (strain DSM 10229 / NCIMB 13809 / X14)).